The primary structure comprises 203 residues: ATP-dependent Clp protease proteolytic subunit (203 aa).

Serine 103 serves as the catalytic Nucleophile. Residue histidine 128 is part of the active site.

Belongs to the peptidase S14 family. Fourteen ClpP subunits assemble into 2 heptameric rings which stack back to back to give a disk-like structure with a central cavity, resembling the structure of eukaryotic proteasomes.

The protein localises to the cytoplasm. It carries out the reaction Hydrolysis of proteins to small peptides in the presence of ATP and magnesium. alpha-casein is the usual test substrate. In the absence of ATP, only oligopeptides shorter than five residues are hydrolyzed (such as succinyl-Leu-Tyr-|-NHMec, and Leu-Tyr-Leu-|-Tyr-Trp, in which cleavage of the -Tyr-|-Leu- and -Tyr-|-Trp bonds also occurs).. Functionally, cleaves peptides in various proteins in a process that requires ATP hydrolysis. Has a chymotrypsin-like activity. Plays a major role in the degradation of misfolded proteins. The polypeptide is ATP-dependent Clp protease proteolytic subunit (Dichelobacter nodosus (strain VCS1703A)).